We begin with the raw amino-acid sequence, 165 residues long: uncharacterized protein (165 aa).

The chain crosses the membrane as a helical span at residues 16–36 (ASISSILNFFFFYIMEYFVAV).

Belongs to the asfivirus F165R family.

The protein resides in the host membrane. This is an uncharacterized protein from African swine fever virus (isolate Tick/Malawi/Lil 20-1/1983) (ASFV).